The following is an 804-amino-acid chain: ATP-dependent RNA helicase dbp4 (804 aa).

The segment at 1–24 (MAPANAPRNGKYAKSSQRTLKRKR) is disordered. A Q motif motif is present at residues 46 to 74 (KAFTDLPLSEPTLSGLSASHYKTLTDIQS). One can recognise a Helicase ATP-binding domain in the interval 77-251 (VSHALKGRDI…RLSLQDPEYV (175 aa)). 90–97 (AKTGSGKT) is a binding site for ATP. The DEAD box motif lies at 199–202 (DEAD). The Helicase C-terminal domain occupies 277–436 (KLDILWSFIR…SIKNQLQNMC (160 aa)). 3 disordered regions span residues 493 to 541 (GDDT…DRMF), 589 to 615 (DKQLEVGGSSDESGSDSEAETGKKDVK), and 695 to 804 (LADV…GLLG). The span at 521–541 (DEKKSKKKDAPQVRTKYDRMF) shows a compositional bias: basic and acidic residues. A compositionally biased stretch (basic and acidic residues) spans 695–705 (LADVEDKELVK). Over residues 706–715 (QKRREKKEKR) the composition is skewed to basic residues.

It belongs to the DEAD box helicase family. DDX10/DBP4 subfamily. In terms of assembly, interacts with the U3 and U14 snoRNAs. Associates with pre-ribosomal complexes.

The protein resides in the nucleus. It is found in the nucleolus. The enzyme catalyses ATP + H2O = ADP + phosphate + H(+). In terms of biological role, ATP-dependent RNA helicase required for ribosome biogenesis. Involved in the release of U14 snoRNA in pre-ribosomal complexes. Required for pre-rRNA cleavage at site A2. The polypeptide is ATP-dependent RNA helicase dbp4 (dbp4) (Aspergillus terreus (strain NIH 2624 / FGSC A1156)).